The primary structure comprises 499 residues: Salviol synthase (499 aa).

Residues 4–24 (HIPSLVLCISFFIFFKIVSKL) form a helical membrane-spanning segment. Cys436 is a heme binding site.

This sequence belongs to the cytochrome P450 family. Heme is required as a cofactor. In terms of tissue distribution, expressed in leaf glandular trichomes.

The protein localises to the membrane. The enzyme catalyses ferruginol + reduced [NADPH--hemoprotein reductase] + O2 = salviol + oxidized [NADPH--hemoprotein reductase] + H2O + H(+). Its pathway is secondary metabolite biosynthesis; terpenoid biosynthesis. In terms of biological role, monooxygenase involved in the biosynthesis of labdane-related diterpenes natural products. Catalyzes the oxidation of ferruginol to produce salviol. Salviol is an intermediate in the biosynthesis of carnosate, a potent antioxidant. This chain is Salviol synthase, found in Salvia pomifera (Apple sage).